We begin with the raw amino-acid sequence, 152 residues long: Cell division protein SepF (152 aa).

Positions 23–32 are enriched in basic and acidic residues; the sequence is EVAREPEPMQ. Positions 23 to 42 are disordered; that stretch reads EVAREPEPMQKKTKKEKPSK.

It belongs to the SepF family. As to quaternary structure, homodimer. Interacts with FtsZ.

Its subcellular location is the cytoplasm. Functionally, cell division protein that is part of the divisome complex and is recruited early to the Z-ring. Probably stimulates Z-ring formation, perhaps through the cross-linking of FtsZ protofilaments. Its function overlaps with FtsA. The sequence is that of Cell division protein SepF from Listeria innocua serovar 6a (strain ATCC BAA-680 / CLIP 11262).